The following is a 165-amino-acid chain: Cytochrome c-type biogenesis protein CcmE (165 aa).

Residues 1–7 (MTRKQKR) lie on the Cytoplasmic side of the membrane. The chain crosses the membrane as a helical; Signal-anchor for type II membrane protein span at residues 8-28 (LAVIAGGMGFIIAAVLLVMFA). At 29 to 165 (FSQSVAYFYM…GQGQEAKATR (137 aa)) the chain is on the periplasmic side. Residues histidine 124 and tyrosine 128 each contribute to the heme site. Residues 144 to 154 (QDGQGAQSQAG) are compositionally biased toward low complexity. The tract at residues 144-165 (QDGQGAQSQAGQGQGQEAKATR) is disordered.

This sequence belongs to the CcmE/CycJ family.

It is found in the cell inner membrane. Heme chaperone required for the biogenesis of c-type cytochromes. Transiently binds heme delivered by CcmC and transfers the heme to apo-cytochromes in a process facilitated by CcmF and CcmH. The chain is Cytochrome c-type biogenesis protein CcmE from Rhizobium etli (strain CIAT 652).